We begin with the raw amino-acid sequence, 842 residues long: MVLSQDVRGASVRRRNRPTVVCTNCKRRKSKCDRQNPCSNCVRFGNKDTCHYVQNPKNTESQHGEDTDNKVKKQQPQMIKGKRNGTSSSIVGSKASSISPTGQSLDVPLVLSGKNYVNLSPSGNFVEFKRSAVTMFSYFCKRAIQDRDLYLKALVTFRSIAVEMTTNTLRGTKNYSKNPSLPESFKPLSIFDADGDPLSSDSLFRQHQLIHKSLFDKYGKYRKDEAIKIVDVCELLNDNLPSRSLFIDHILVHFESHVIHMVPIFEMEFLKYDVNNFYDKWEQSREISVKDFDHMVCCVILLITKICILSTKFARLPSELLEHFEKLDTSKYIAIIHYYMFEMKSLRKCTLRQLQILLLLRFYHWCAPEDGDGDSLQHSHILMGTIIASCQEMGISWLCIRDPGIYWFQLFGQSKRVPFILSPEDFKIIYQMIWSYVLHWDRKMFLINGQECLIGKSHLYDVTGQELSWHHRMVALDHIIMKMNDILNDSPSRVDIVALKQEWNNALRIFELIRDTKKEHLHLNFEYETTLELFRLCLSHAELTHLEQVNDVESFHLTVQSLWDQIVKLASKCHRYFYGPQEMDPYSRFFTNKIISVVADKLCTLIPAFVLRLNRFGEMGFDQMNMMVKFLFGVCSMYYNELGFDYYRCFESMFTAKISYKILNRPRNKNPWEIILEFLLCQLEKEGIKDQLRELKIIQNLPVLVSLRESLNLIPEYHRDAVKLWNTDVVPIGHSSVNFTLNLREESLEPFLVDRYSQTFNIFTSFYDHASSQLAEEAEDTSSKIQYNVENSAEQAQEIAETNAVPVEHPLSLEPTNPVNLEESNLELIRNMFEPLDFISFF.

A DNA-binding region (zn(2)-C6 fungal-type) is located at residues 22 to 50; sequence CTNCKRRKSKCDRQNPCSNCVRFGNKDTC. The interval 55–101 is disordered; that stretch reads NPKNTESQHGEDTDNKVKKQQPQMIKGKRNGTSSSIVGSKASSISPT. Residues 60-71 show a composition bias toward basic and acidic residues; it reads ESQHGEDTDNKV. Residues 87-99 are compositionally biased toward low complexity; the sequence is SSSIVGSKASSIS.

It belongs to the OAF3 family.

It localises to the cytoplasm. The protein resides in the nucleus. Its subcellular location is the mitochondrion. Its function is as follows. Transcriptional inhibitor with a significantly increased number of target genes in response to oleate. The sequence is that of Oleate activated transcription factor 3 (OAF3) from Zygosaccharomyces rouxii (strain ATCC 2623 / CBS 732 / NBRC 1130 / NCYC 568 / NRRL Y-229).